The sequence spans 160 residues: Major pollen allergen Bet v 1-E (160 aa).

Residues lysine 55, tyrosine 82, tyrosine 84, and asparagine 101 each coordinate brassinolide.

The protein belongs to the BetVI family.

Its subcellular location is the cytoplasm. Its function is as follows. May be a general steroid carrier protein. The polypeptide is Major pollen allergen Bet v 1-E (BETV1E) (Betula pendula (European white birch)).